The chain runs to 152 residues: Aspartate 1-decarboxylase (152 aa).

The Schiff-base intermediate with substrate; via pyruvic acid role is filled by Ser24. At Ser24 the chain carries Pyruvic acid (Ser). Thr56 is a substrate binding site. The active-site Proton donor is the Tyr57. Residue 72–74 (GAA) participates in substrate binding.

Belongs to the PanD family. Heterooctamer of four alpha and four beta subunits. Pyruvate serves as cofactor. Is synthesized initially as an inactive proenzyme, which is activated by self-cleavage at a specific serine bond to produce a beta-subunit with a hydroxyl group at its C-terminus and an alpha-subunit with a pyruvoyl group at its N-terminus.

The protein resides in the cytoplasm. It catalyses the reaction L-aspartate + H(+) = beta-alanine + CO2. Its pathway is cofactor biosynthesis; (R)-pantothenate biosynthesis; beta-alanine from L-aspartate: step 1/1. Its function is as follows. Catalyzes the pyruvoyl-dependent decarboxylation of aspartate to produce beta-alanine. This is Aspartate 1-decarboxylase from Rhodospirillum centenum (strain ATCC 51521 / SW).